The sequence spans 110 residues: U32-theraphotoxin-Cg1a (110 aa).

An N-terminal signal peptide occupies residues methionine 1–serine 19. A propeptide spanning residues leucine 20–arginine 43 is cleaved from the precursor. Cystine bridges form between cysteine 49–cysteine 63, cysteine 56–cysteine 69, cysteine 60–cysteine 105, and cysteine 62–cysteine 80.

Belongs to the neurotoxin 03 (Tx2) family. 02 subfamily. Expressed by the venom gland.

It localises to the secreted. Its function is as follows. Probable ion channel inhibitor. This chain is U32-theraphotoxin-Cg1a, found in Chilobrachys guangxiensis (Chinese earth tiger tarantula).